The chain runs to 242 residues: uncharacterized protein (242 aa).

This is an uncharacterized protein from Haemophilus influenzae (strain ATCC 51907 / DSM 11121 / KW20 / Rd).